A 275-amino-acid chain; its full sequence is Transmembrane protein 106B (275 aa).

The tract at residues 1–24 is disordered; that stretch reads MGKSLSHLPLHSNKEDGYDGVTST. A lipid anchor (N-myristoyl glycine) is attached at Gly2. Residues 2-97 are Cytoplasmic-facing; the sequence is GKSLSHLPLH…QRLRPRRTKL (96 aa). Residue Ser34 is modified to Phosphoserine. The helical transmembrane segment at 98–118 threads the bilayer; sequence YVMASVFVCLLLSGLAVFFLF. The Lumenal portion of the chain corresponds to 119–275; it reads PRSIDVKYIG…EYLNVLQPQQ (157 aa). Residues Asn146, Asn152, Asn165, and Asn184 are each glycosylated (N-linked (GlcNAc...) asparagine). A disulfide bond links Cys215 and Cys254. N-linked (GlcNAc...) asparagine glycosylation is present at Asn257.

Belongs to the TMEM106 family. Can form homomers. Interacts (via N-terminus) with MAP6 (via C-terminus). Interacts (via C-terminus) with the vacuolar-type ATPase subunit ATP6AP1. Interacts (via N-terminus) with AP2M1 and CLTC. Interacts with TMEM106C. As to expression, expressed in cortical neurons (at protein level).

The protein resides in the late endosome membrane. It is found in the lysosome membrane. Its subcellular location is the cell membrane. In terms of biological role, involved in dendrite morphogenesis and maintenance by regulating lysosomal trafficking. May act as a molecular brake for retrograde transport of late endosomes/lysosomes, possibly via its interaction with MAP6. In neurons, may also play a role in the regulation of lysosomal size and responsiveness to stress. Required for proper lysosomal acidification. Functionally, in neurons, involved in the transport of late endosomes/lysosomes. May be involved in dendrite morphogenesis and maintenance by regulating lysosomal trafficking. May act as a molecular brake for retrograde transport of late endosomes/lysosomes, possibly via its interaction with MAP6. In motoneurons, may mediate the axonal transport of lysosomes and axonal sorting at the initial segment. It remains unclear whether TMEM106B affects the transport of moving lysosomes in the anterograde or retrograde direction in neurites and whether it is particularly important in the sorting of lysosomes in axons or in dendrites. In neurons, may also play a role in the regulation of lysosomal size and responsiveness to stress. Required for proper lysosomal acidification. The protein is Transmembrane protein 106B (Tmem106b) of Rattus norvegicus (Rat).